A 141-amino-acid polypeptide reads, in one-letter code: Large ribosomal subunit protein uL11 (141 aa).

The protein belongs to the universal ribosomal protein uL11 family. In terms of assembly, part of the ribosomal stalk of the 50S ribosomal subunit. Interacts with L10 and the large rRNA to form the base of the stalk. L10 forms an elongated spine to which L12 dimers bind in a sequential fashion forming a multimeric L10(L12)X complex. One or more lysine residues are methylated.

In terms of biological role, forms part of the ribosomal stalk which helps the ribosome interact with GTP-bound translation factors. The chain is Large ribosomal subunit protein uL11 from Thermotoga sp. (strain RQ2).